A 116-amino-acid chain; its full sequence is Large ribosomal subunit protein bL17 (116 aa).

It belongs to the bacterial ribosomal protein bL17 family. In terms of assembly, part of the 50S ribosomal subunit. Contacts protein L32.

This chain is Large ribosomal subunit protein bL17, found in Helicobacter acinonychis (strain Sheeba).